The chain runs to 205 residues: MSAQVRETLVPSELYRKAGVIYGTQICTRYMRQFVHRILPEGYYQLDYLKIDERLAMAAKFLSTFEPEKIAVVSVRIYGQKPVRMMCERVGCKAITGRIIPGTFTNPNLEHYVEPDVVVVTDPRMDRQAVVEASKVGIPVVALVDTDNSIENIDLVIPANNRGRRSLALIYWILTREILRRRGVLKPDEDLDVSYEEFMARKVFK.

It belongs to the universal ribosomal protein uS2 family.

This is Small ribosomal subunit protein uS2 (rps2) from Aeropyrum pernix (strain ATCC 700893 / DSM 11879 / JCM 9820 / NBRC 100138 / K1).